The primary structure comprises 507 residues: Cytochrome P450 3A28 (507 aa).

Cys-442 contributes to the heme binding site.

It belongs to the cytochrome P450 family. It depends on heme as a cofactor.

It localises to the endoplasmic reticulum membrane. It is found in the microsome membrane. It carries out the reaction an organic molecule + reduced [NADPH--hemoprotein reductase] + O2 = an alcohol + oxidized [NADPH--hemoprotein reductase] + H2O + H(+). Its function is as follows. Cytochromes P450 are a group of heme-thiolate monooxygenases. In liver microsomes, this enzyme is involved in an NADPH-dependent electron transport pathway. It oxidizes a variety of structurally unrelated compounds, including steroids, fatty acids, and xenobiotics. In Bos taurus (Bovine), this protein is Cytochrome P450 3A28 (CYP3A28).